Consider the following 549-residue polypeptide: Chaperonin GroEL (549 aa).

Residues 29 to 32 (TLGP), Lys-50, 86 to 90 (DGTTT), Gly-414, 477 to 479 (NAA), and Asp-493 each bind ATP.

It belongs to the chaperonin (HSP60) family. In terms of assembly, forms a cylinder of 14 subunits composed of two heptameric rings stacked back-to-back. Interacts with the co-chaperonin GroES.

Its subcellular location is the cytoplasm. It catalyses the reaction ATP + H2O + a folded polypeptide = ADP + phosphate + an unfolded polypeptide.. In terms of biological role, together with its co-chaperonin GroES, plays an essential role in assisting protein folding. The GroEL-GroES system forms a nano-cage that allows encapsulation of the non-native substrate proteins and provides a physical environment optimized to promote and accelerate protein folding. The sequence is that of Chaperonin GroEL from Geotalea uraniireducens (strain Rf4) (Geobacter uraniireducens).